A 252-amino-acid polypeptide reads, in one-letter code: Orotidine 5'-phosphate decarboxylase (252 aa).

Residues aspartate 24, lysine 46, 73–82 (DLKFHDIPNT), threonine 137, arginine 199, glutamine 208, glycine 228, and arginine 229 contribute to the substrate site. Lysine 75 acts as the Proton donor in catalysis.

The protein belongs to the OMP decarboxylase family. Type 1 subfamily. Homodimer.

It catalyses the reaction orotidine 5'-phosphate + H(+) = UMP + CO2. The protein operates within pyrimidine metabolism; UMP biosynthesis via de novo pathway; UMP from orotate: step 2/2. Catalyzes the decarboxylation of orotidine 5'-monophosphate (OMP) to uridine 5'-monophosphate (UMP). This is Orotidine 5'-phosphate decarboxylase from Moorella thermoacetica (strain ATCC 39073 / JCM 9320).